The chain runs to 1575 residues: Mediator of RNA polymerase II transcription subunit 1 (1575 aa).

Positions 1 to 670 (MKAQGETEDS…YGSSPLERQN (670 aa)) are interaction with the Mediator complex and THRA. The tract at residues 16 to 590 (MSSLLERLHA…SIKDRHESVG (575 aa)) is interaction with ESR1. 2 interaction with the Mediator complex regions span residues 108–212 (FYVE…GYLT) and 215–390 (SGGH…SLQG). Residues 405–644 (PLILNMIRHQ…MAGNTKNHPM (240 aa)) form an interaction with THRA region. The interval 542-789 (PASSPGYGMT…TDILSDIAEE (248 aa)) is interaction with VDR. At Ser-588 the chain carries Phosphoserine. Positions 604–608 (LTSLL) match the LXXLL motif 1 motif. 5 disordered regions span residues 609 to 706 (QITG…QTED), 737 to 760 (HITP…SHPQ), 791 to 818 (SKLP…HSQS), 874 to 895 (SQSG…NDDF), and 951 to 1564 (SGSQ…GEED). The segment covering 622–632 (PTPPHHTPPPV) has biased composition (pro residues). The segment at 622–701 (PTPPHHTPPP…SSRVPPDKPK (80 aa)) is interaction with GATA1. An interaction with PPARGC1A and THRA region spans residues 622–701 (PTPPHHTPPP…SSRVPPDKPK (80 aa)). Residues 645-649 (LMNLL) carry the LXXLL motif 2 motif. Over residues 655-675 (QDFSTLYGSSPLERQNSSSGS) the composition is skewed to polar residues. The segment at 656–1066 (DFSTLYGSSP…TPPIPKITIQ (411 aa)) is interaction with ESR1. Ser-664 is subject to Phosphoserine. The span at 696–706 (PPDKPKHQTED) shows a compositional bias: basic and acidic residues. Ser-795 is subject to Phosphoserine. The residue at position 805 (Thr-805) is a Phosphothreonine. Polar residues predominate over residues 808-818 (RDSSSSGHSQS). Residues 875 to 902 (QSGFGEEYFDESSQSGDNDDFKGFASQA) carry the Integrase domain-binding motif (IBM) motif. 3 positions are modified to phosphoserine: Ser-887, Ser-953, and Ser-955. The span at 963–974 (LGKEKTQKRVKE) shows a compositional bias: basic and acidic residues. A compositionally biased stretch (gly residues) spans 976–986 (NGTGASSGSGP). Residue Thr-1032 is modified to Phosphothreonine; by MAPK1 or MAPK3. Residues 1034–1051 (PTSTGGSKSPGSSGRSQT) are compositionally biased toward low complexity. Phosphothreonine is present on residues Thr-1051 and Thr-1057. 2 stretches are compositionally biased toward low complexity: residues 1078 to 1094 (SSHS…SSGS) and 1101 to 1152 (SSSS…SQTG). Ser-1158 is modified (phosphoserine). The span at 1158–1184 (SPITKHGLSSGSSSTKMKPQGKPSSLM) shows a compositional bias: polar residues. At Lys-1179 the chain carries N6-acetyllysine. Residues 1185 to 1197 (NPSISKPNISPSH) show a composition bias toward low complexity. The residue at position 1209 (Ser-1209) is a Phosphoserine. A Phosphothreonine modification is found at Thr-1217. Composition is skewed to low complexity over residues 1220–1258 (SSKA…GSVS) and 1265–1295 (SNSC…SKGK). At Ser-1225 the chain carries Phosphoserine. Residues 1251–1423 (SASSGSVSQK…KPGESGGDGL (173 aa)) are interaction with TP53. Residues Ser-1304 and Ser-1349 each carry the phosphoserine modification. Positions 1331-1352 (MGASTNSSNHPMSSKHNTSGGE) are enriched in polar residues. Residues 1354–1366 (QSKREKSDKDKSK) are compositionally biased toward basic and acidic residues. Phosphoserine occurs at positions 1405 and 1435. Composition is skewed to polar residues over residues 1427-1442 (IASS…SGST) and 1450-1484 (PSHS…SPSS). Phosphothreonine is present on Thr-1442. Position 1459 is a phosphothreonine; by MAPK1 or MAPK3 (Thr-1459). Residues Ser-1465, Ser-1467, Ser-1481, Ser-1483, and Ser-1484 each carry the phosphoserine modification. A compositionally biased stretch (basic residues) spans 1498–1507 (KHKKHKKEKK). Lys-1523 is subject to N6-acetyllysine. The span at 1527-1545 (WSKSPISSDPTASVTNNPI) shows a compositional bias: polar residues.

Belongs to the Mediator complex subunit 1 family. Component of the Mediator complex, which is composed of MED1, MED4, MED6, MED7, MED8, MED9, MED10, MED11, MED12, MED13, MED13L, MED14, MED15, MED16, MED17, MED18, MED19, MED20, MED21, MED22, MED23, MED24, MED25, MED26, MED27, MED29, MED30, MED31, CCNC, CDK8 and CDC2L6/CDK11. The MED12, MED13, CCNC and CDK8 subunits form a distinct module termed the CDK8 module. Mediator containing the CDK8 module is less active than Mediator lacking this module in supporting transcriptional activation. Individual preparations of the Mediator complex lacking one or more distinct subunits have been variously termed ARC, CRSP, DRIP, PC2, SMCC and TRAP. This subunit specifically interacts with a number of nuclear receptors in a ligand-dependent fashion including AR, ESR1, ESR2, PPARA, PPARG, RORA, RXRA, RXRG, THRA, THRB and VDR. Interacts with CTNNB1, GABPA, GLI3, PPARGC1A and TP53. Interacts with GATA1 and YWHAH. Interacts with CLOCK; this interaction requires the presence of THRAP3. Interacts with CCAR1. Interacts with NR4A3. Interacts (via IBM motif) with PSIP1 (via IBD domain); phosphorylation increases its affinity for PSIP1. Interacts with USP22. Post-translationally, phosphorylated by MAPK1 or MAPK3 during G2/M phase which may enhance protein stability and promote entry into the nucleolus. Phosphorylation increases its interaction with PSIP1. In terms of tissue distribution, widely expressed in the adult, with high levels of expression in the liver, lung, intestinal mucosa, kidney cortex, thymic cortex, splenic follicle and seminiferous epithelium in testis. Also expressed in the adult heart, brain, spleen and skeletal muscle.

It is found in the nucleus. In terms of biological role, component of the Mediator complex, a coactivator involved in the regulated transcription of nearly all RNA polymerase II-dependent genes. Mediator functions as a bridge to convey information from gene-specific regulatory proteins to the basal RNA polymerase II transcription machinery. Mediator is recruited to promoters by direct interactions with regulatory proteins and serves as a scaffold for the assembly of a functional preinitiation complex with RNA polymerase II and the general transcription factors. Essential for embryogenesis, including development of the central nervous system, heart, liver and placenta and for erythropoiesis. Also required for normal transcriptional control of thyroid-stimulating hormone beta (TSHB) in the pituitary. Acts as a coactivator for GATA1-mediated transcriptional activation during erythroid differentiation of K562 erythroleukemia cells. The protein is Mediator of RNA polymerase II transcription subunit 1 (Med1) of Mus musculus (Mouse).